Reading from the N-terminus, the 352-residue chain is Ly6/PLAUR domain-containing protein 3 (352 aa).

The first 32 residues, 1–32 (MDAARRGDTQPVMWTTRWLLLLPLLLCEGAQA), serve as a signal peptide directing secretion. Positions 35-128 (CYSCVQKADD…LNLTLRGLNP (94 aa)) constitute a UPAR/Ly6 1 domain. 4 N-linked (GlcNAc...) asparagine glycosylation sites follow: Asn-120, Asn-131, Asn-178, and Asn-185. Residues 142-224 (CYSCMGLSRE…GSCCQGPRCN (83 aa)) enclose the UPAR/Ly6 2 domain. Pro residues predominate over residues 236–249 (RIPPLVLLPPPTTP). Residues 236-330 (RIPPLVLLPP…KGGAQIPSKG (95 aa)) are disordered. Residues 250–285 (APSTRTQNSSSTTSTTAPTTATTTIKPTTVQASHTS) show a composition bias toward low complexity. Composition is skewed to basic and acidic residues over residues 286-300 (STHE…EEGS) and 309-320 (HQDRSNMGKFPE). Gly-330 is lipidated: GPI-anchor amidated glycine. A propeptide spans 331–352 (GSDALGSWLSAILLTVVAGAML) (removed in mature form).

In terms of assembly, interacts with AGR2 and AGR3. Binds laminin-1 and laminin-5. Interacts with LGALS3. In terms of tissue distribution, found predominantly on the basal layers of squamous epithelium. Expressed in the gravid uterus and on epithelial of the upper gastrointestinal tract. It has been found in tumor lines which metastasize via the lymphatic system.

It localises to the cell membrane. Functionally, supports cell migration. May be involved in tumor progression. This chain is Ly6/PLAUR domain-containing protein 3 (Lypd3), found in Rattus norvegicus (Rat).